The following is a 214-amino-acid chain: Glycerol-3-phosphate acyltransferase (214 aa).

Transmembrane regions (helical) follow at residues 8–28 (LILA…QIFF), 70–90 (LLPL…LIAV), 111–131 (AGVV…IFIV), 144–164 (IVVA…GIIL), and 165–185 (PSYD…ILIR).

Belongs to the PlsY family. As to quaternary structure, probably interacts with PlsX.

Its subcellular location is the cell membrane. The catalysed reaction is an acyl phosphate + sn-glycerol 3-phosphate = a 1-acyl-sn-glycero-3-phosphate + phosphate. It functions in the pathway lipid metabolism; phospholipid metabolism. Its function is as follows. Catalyzes the transfer of an acyl group from acyl-phosphate (acyl-PO(4)) to glycerol-3-phosphate (G3P) to form lysophosphatidic acid (LPA). This enzyme utilizes acyl-phosphate as fatty acyl donor, but not acyl-CoA or acyl-ACP. The chain is Glycerol-3-phosphate acyltransferase from Streptococcus gordonii (strain Challis / ATCC 35105 / BCRC 15272 / CH1 / DL1 / V288).